A 722-amino-acid chain; its full sequence is Tegument protein UL46 (722 aa).

The tract at residues 423–534 is disordered; the sequence is RLAASGPPGG…AAAARPLAAQ (112 aa). Basic and acidic residues-rich tracts occupy residues 440 to 451 and 474 to 491; these read CRDKIQRTRRDN and HRED…DRGP. The span at 510 to 522 shows a compositional bias: pro residues; that stretch reads PRLPPRNPAPPEQ. A compositionally biased stretch (low complexity) spans 523–534; that stretch reads RPAAAARPLAAQ.

This sequence belongs to the herpesviridae HHV-1 VP11/12 protein family. As to quaternary structure, interacts with VP16. Interacts with host LCK, PIK3R1, SHC1 AND GRB2; these interactions promote the activation of the PI3K/AKT pathway. Interacts with host YWHAB. Interacts with ICP0; this interaction targets UL46 for degradation by the proteasome. In terms of processing, phosphorylated by host LCK. The phosphorylation seems to be lymphocyte-specific.

The protein resides in the virion tegument. Its subcellular location is the host cell membrane. Its function is as follows. Plays a role in the activation of the host PI3K/AKT pathway to promote cell survival. Interacts with and activates host LCK and thereby recruits downstream partners SHC1, GRB2 and PI3KR1 in order to activate the PI3K pathway by phosphorylating host AKT on its activating residues. This mechanism is inhibited by the viral protein US3 that instead promotes incorporation of UL46 into virions. This Homo sapiens (Human) protein is Tegument protein UL46.